Here is a 110-residue protein sequence, read N- to C-terminus: CHH-like protein (110 aa).

The signal sequence occupies residues 1 to 23 (MHLSSVQFAWAALVALAVSAAGA). Residues 24–35 (LPSSAPHHVERR) constitute a propeptide that is removed on maturation. Intrachain disulfides connect C42-C78, C58-C74, and C61-C87. A Valine amide modification is found at V107.

It belongs to the arthropod CHH/MIH/GIH/VIH hormone family.

Its subcellular location is the secreted. In Bombyx mori (Silk moth), this protein is CHH-like protein (CHHL).